The following is a 344-amino-acid chain: uncharacterized protein (344 aa).

The NADP(+) site is built by Lys-38 and Tyr-167.

It belongs to the NAD(P)-dependent epimerase/dehydratase family. Dihydroflavonol-4-reductase subfamily.

This is an uncharacterized protein from Saccharomyces cerevisiae (strain ATCC 204508 / S288c) (Baker's yeast).